A 374-amino-acid polypeptide reads, in one-letter code: DNA integrity scanning protein DisA (374 aa).

In terms of domain architecture, DAC spans 20–158 (EALMRASLSA…DGERRVLEES (139 aa)). Residues G87, L105, and 118 to 122 (TRHRT) contribute to the ATP site.

It belongs to the DisA family. Homooctamer. Requires Mg(2+) as cofactor.

The catalysed reaction is 2 ATP = 3',3'-c-di-AMP + 2 diphosphate. Functionally, participates in a DNA-damage check-point that is active prior to asymmetric division when DNA is damaged. DisA forms globular foci that rapidly scan along the chromosomes during sporulation, searching for lesions. When a lesion is present, DisA pauses at the lesion site. This triggers a cellular response that culminates in a temporary block in sporulation initiation. Also has diadenylate cyclase activity, catalyzing the condensation of 2 ATP molecules into cyclic di-AMP (c-di-AMP). c-di-AMP acts as a signaling molecule that couples DNA integrity with progression of sporulation. The rise in c-di-AMP level generated by DisA while scanning the chromosome, operates as a positive signal that advances sporulation; upon encountering a lesion, the DisA focus arrests at the damaged site and halts c-di-AMP synthesis. This is DNA integrity scanning protein DisA from Streptomyces griseus subsp. griseus (strain JCM 4626 / CBS 651.72 / NBRC 13350 / KCC S-0626 / ISP 5235).